The primary structure comprises 429 residues: Glutamate-1-semialdehyde 2,1-aminomutase 2 (429 aa).

The residue at position 268 (Lys268) is an N6-(pyridoxal phosphate)lysine.

This sequence belongs to the class-III pyridoxal-phosphate-dependent aminotransferase family. HemL subfamily. Homodimer. The cofactor is pyridoxal 5'-phosphate.

Its subcellular location is the cytoplasm. The catalysed reaction is (S)-4-amino-5-oxopentanoate = 5-aminolevulinate. It participates in porphyrin-containing compound metabolism; protoporphyrin-IX biosynthesis; 5-aminolevulinate from L-glutamyl-tRNA(Glu): step 2/2. The polypeptide is Glutamate-1-semialdehyde 2,1-aminomutase 2 (Bacillus thuringiensis (strain Al Hakam)).